The primary structure comprises 157 residues: Small ribosomal subunit protein uS7 (157 aa).

The protein belongs to the universal ribosomal protein uS7 family. Part of the 30S ribosomal subunit. Contacts proteins S9 and S11.

Functionally, one of the primary rRNA binding proteins, it binds directly to 16S rRNA where it nucleates assembly of the head domain of the 30S subunit. Is located at the subunit interface close to the decoding center, probably blocks exit of the E-site tRNA. In Akkermansia muciniphila (strain ATCC BAA-835 / DSM 22959 / JCM 33894 / BCRC 81048 / CCUG 64013 / CIP 107961 / Muc), this protein is Small ribosomal subunit protein uS7.